The primary structure comprises 235 residues: MAFQELCCSNLLKFENCSLLETHKKISIEGNISAGKSTLINILSDNGYNVVQEPLEQWRGNNLLDKLYKDPSRWAYTFQSHAFWTRTKTYIDALNKNKGNIILERSVFSDKYIFATALHDIGYIDDTEWNIYNEYSKWMTEFMDIKIDGIIYLKTSPDICYKRMLNRARHEENTVKIDYLNLLHDKHEKWLSENNEHEFKVPVLEINGDGDFIDDSNRQSSILSNIYDFISELYI.

ATP is bound at residue 30 to 38 (GNISAGKST). The substrate site is built by E53, Y68, and Q79. E104 functions as the Proton acceptor in the catalytic mechanism. Positions 105, 110, and 172 each coordinate substrate.

It belongs to the DCK/DGK family.

It carries out the reaction 2'-deoxycytidine + a ribonucleoside 5'-triphosphate = dCMP + a ribonucleoside 5'-diphosphate + H(+). The sequence is that of Probable deoxycytidine kinase FPV151 from Vertebrata (FPV).